Reading from the N-terminus, the 844-residue chain is Serrate RNA effector molecule homolog B (844 aa).

Disordered regions lie at residues 1–90 (MADS…HGSD), 277–401 (EAAK…PRPL), 555–575 (ELLS…GNPT), and 794–825 (PNPY…MRGD). Composition is skewed to basic and acidic residues over residues 16–73 (FRRE…RHDI) and 277–337 (EAAK…ETRK). Over residues 349–359 (SDDGSDSESDT) the composition is skewed to acidic residues. The span at 376-397 (DTPKKEEETEKPKEKPKEDTVK) shows a compositional bias: basic and acidic residues.

The protein belongs to the ARS2 family. In terms of assembly, interacts ncbp1/cbp80.

It is found in the nucleus. The protein resides in the nucleoplasm. Its subcellular location is the cytoplasm. Its function is as follows. Acts as a mediator between the cap-binding complex (CBC) and the primary microRNAs (miRNAs) processing machinery during cell proliferation. Contributes to the stability and delivery of capped primary miRNA transcripts to the primary miRNA processing complex, thereby playing a role in RNA-mediated gene silencing (RNAi) by miRNAs. The polypeptide is Serrate RNA effector molecule homolog B (srrt-b) (Xenopus laevis (African clawed frog)).